Here is a 42-residue protein sequence, read N- to C-terminus: Photosystem I reaction center subunit IX (42 aa).

Residues 7–27 traverse the membrane as a helical segment; sequence YLSTAPVLATLWFGFLAGLLI.

The protein belongs to the PsaJ family.

The protein localises to the plastid. It is found in the chloroplast thylakoid membrane. In terms of biological role, may help in the organization of the PsaE and PsaF subunits. This chain is Photosystem I reaction center subunit IX, found in Huperzia lucidula (Shining clubmoss).